A 182-amino-acid chain; its full sequence is Thioredoxin X, chloroplastic (182 aa).

Residues 1–67 (MDSIVSSSTI…TRKSSSSVIR (67 aa)) constitute a chloroplast transit peptide. The 110-residue stretch at 68 to 177 (CGGIKEIGES…LKEYIDGLLN (110 aa)) folds into the Thioredoxin domain. Catalysis depends on nucleophile residues Cys-99 and Cys-102. The cysteines at positions 99 and 102 are disulfide-linked.

Belongs to the thioredoxin family. As to expression, predominantly expressed in leaves.

It is found in the plastid. It localises to the chloroplast stroma. Probable thiol-disulfide oxidoreductase that may participate in various redox reactions. The polypeptide is Thioredoxin X, chloroplastic (ATHX) (Arabidopsis thaliana (Mouse-ear cress)).